We begin with the raw amino-acid sequence, 98 residues long: NADH-ubiquinone oxidoreductase chain 4L (98 aa).

A run of 3 helical transmembrane segments spans residues 1-21, 26-46, and 61-81; these read MPSISTNIILAFTTALLGVLI, LMSSLLCLEGMMLSMFILVSL, and IILLVFAACEAAVGLALLVMV.

The protein belongs to the complex I subunit 4L family. Core subunit of respiratory chain NADH dehydrogenase (Complex I) which is composed of 45 different subunits.

The protein resides in the mitochondrion inner membrane. It catalyses the reaction a ubiquinone + NADH + 5 H(+)(in) = a ubiquinol + NAD(+) + 4 H(+)(out). Core subunit of the mitochondrial membrane respiratory chain NADH dehydrogenase (Complex I) which catalyzes electron transfer from NADH through the respiratory chain, using ubiquinone as an electron acceptor. Part of the enzyme membrane arm which is embedded in the lipid bilayer and involved in proton translocation. The chain is NADH-ubiquinone oxidoreductase chain 4L (MT-ND4L) from Galago senegalensis (Northern lesser bushbaby).